Reading from the N-terminus, the 240-residue chain is Protein CDV3 homolog A (240 aa).

Basic and acidic residues predominate over residues 1–15 (MAEPQEKSLDDFFAK). Residues 1–204 (MAEPQEKSLD…TESRREKEME (204 aa)) are disordered. Residue Ala2 is modified to N-acetylalanine. Residues 27-52 (SGSAAGSRGSARPPDGAPSSSSSMSG) are compositionally biased toward low complexity. Positions 57-73 (VKKEKSGKSDNPDQLQE) are enriched in basic and acidic residues. Polar residues-rich tracts occupy residues 127–141 (DKSS…QAQA) and 181–192 (SDTQFPSLQATA). Residues 193-204 (KHTESRREKEME) are compositionally biased toward basic and acidic residues.

The protein belongs to the CDV3 family.

The protein resides in the cytoplasm. The protein is Protein CDV3 homolog A (cdv3-a) of Xenopus laevis (African clawed frog).